The primary structure comprises 97 residues: Large ribosomal subunit protein uL23 (97 aa).

This sequence belongs to the universal ribosomal protein uL23 family. In terms of assembly, part of the 50S ribosomal subunit. Contacts protein L29, and trigger factor when it is bound to the ribosome.

Functionally, one of the early assembly proteins it binds 23S rRNA. One of the proteins that surrounds the polypeptide exit tunnel on the outside of the ribosome. Forms the main docking site for trigger factor binding to the ribosome. This Marinobacter nauticus (strain ATCC 700491 / DSM 11845 / VT8) (Marinobacter aquaeolei) protein is Large ribosomal subunit protein uL23.